Here is a 394-residue protein sequence, read N- to C-terminus: Chorismate synthase (394 aa).

Arginine 48 is an NADP(+) binding site. Residues 52-90 are disordered; it reads QSMITTSRGEPDEVSIQSGLQDGYTTGTPIGMTIENKDA. Polar residues predominate over residues 66-79; sequence SIQSGLQDGYTTGT. Residues 125-127, glycine 297, 312-316, and arginine 339 contribute to the FMN site; these read RSS and HAPTS.

This sequence belongs to the chorismate synthase family. FMNH2 is required as a cofactor.

The enzyme catalyses 5-O-(1-carboxyvinyl)-3-phosphoshikimate = chorismate + phosphate. Its pathway is metabolic intermediate biosynthesis; chorismate biosynthesis; chorismate from D-erythrose 4-phosphate and phosphoenolpyruvate: step 7/7. Its function is as follows. Catalyzes the anti-1,4-elimination of the C-3 phosphate and the C-6 proR hydrogen from 5-enolpyruvylshikimate-3-phosphate (EPSP) to yield chorismate, which is the branch point compound that serves as the starting substrate for the three terminal pathways of aromatic amino acid biosynthesis. This reaction introduces a second double bond into the aromatic ring system. The sequence is that of Chorismate synthase from Halobacterium salinarum (strain ATCC 700922 / JCM 11081 / NRC-1) (Halobacterium halobium).